The chain runs to 375 residues: Odorant receptor 49b (375 aa).

Residues 1-28 (MFEDIQLIYMNIKILRFWALLYDKNLRR) lie on the Cytoplasmic side of the membrane. A helical membrane pass occupies residues 29-49 (YVCIGLASFHIFTQIVYMMST). At 50–60 (NEGLTGIIRNS) the chain is on the extracellular side. The chain crosses the membrane as a helical span at residues 61 to 77 (YMLVLWINTVLRAYLLL). Over 78 to 121 (ADHDRYLALIQKLTEAYYDLLNLNDSYISEILDQVNKVGKLMAR) the chain is Cytoplasmic. Residues 122–142 (GNLFFGMLTSMGFGLYPLSSS) traverse the membrane as a helical segment. The Extracellular segment spans residues 143 to 176 (ERVLPFGSKIPGLNEYESPYYEMWYIFQMLITPM). Residues 177 to 197 (GCCMYIPYTSLIVGLIMFGIV) traverse the membrane as a helical segment. At 198–251 (RCKALQHRLRQVALKHPYGDRDPRELREEIIACIRYQQSIIEYMDHINELTTMM) the chain is on the cytoplasmic side. A helical transmembrane segment spans residues 252 to 272 (FLFELMAFSALLCALLFMLII). The Extracellular portion of the chain corresponds to 273–278 (VSGTSQ). The helical transmembrane segment at 279 to 299 (LIIVCMYINMILAQILALYWY) threads the bilayer. At 300-342 (ANELREQNLAVATAAYETEWFTFDVPLRKNILFMMMRAQRPAA) the chain is on the cytoplasmic side. A helical transmembrane segment spans residues 343 to 363 (ILLGNIRPITLELFQNLLNTT). The Extracellular segment spans residues 364 to 375 (YTFFTVLKRVYG).

It belongs to the insect chemoreceptor superfamily. Heteromeric odorant receptor channel (TC 1.A.69) family. Or30a subfamily. Interacts with Orco. Complexes exist early in the endomembrane system in olfactory sensory neurons (OSNs), coupling these complexes to the conserved ciliary trafficking pathway. As to expression, expressed in olfactory sensory neurons in the antenna.

The protein resides in the cell membrane. Odorant receptor which mediates acceptance or avoidance behavior, depending on its substrates. The odorant receptor repertoire encodes a large collection of odor stimuli that vary widely in identity, intensity, and duration. May form a complex with Orco to form odorant-sensing units, providing sensitive and prolonged odorant signaling and calcium permeability. The polypeptide is Odorant receptor 49b (Or49b) (Drosophila melanogaster (Fruit fly)).